Reading from the N-terminus, the 293-residue chain is Ubiquinone biosynthesis protein COQ9-B, mitochondrial (293 aa).

The interval 21 to 73 (LRSDDQKQPPFSSSSTHAETPEHAEEQYQQQQSPPRYTDQAGEESEDYESEEQ) is disordered. Positions 29 to 38 (PPFSSSSTHA) are enriched in polar residues. Over residues 61-72 (AGEESEDYESEE) the composition is skewed to acidic residues. Residue arginine 219 coordinates a 1,2-diacylglycero-3-phosphoethanolamine.

Belongs to the COQ9 family. In terms of assembly, homodimer. Heterodimer; two heterodimers of COQ7:COQ9 come together on the same side of the lipid pseudo-bilayer and form a curved tetramer with a hydrophobic surface suitable for membrane interaction. These two tetramers assemble into a soluble octamer with a pseudo-bilayer of lipids captured within. Interacts with COQ7; this interaction allows ubiquinone (CoQ) isoprene intermediates presentation to COQ7 and facilitates the COQ7-mediated hydroxylase step.

Its subcellular location is the mitochondrion. Its pathway is cofactor biosynthesis; ubiquinone biosynthesis. Membrane-associated protein that warps the membrane surface to access and bind aromatic isoprenes with high specificity, including ubiquinone (CoQ) isoprene intermediates and presents them directly to COQ7, therefore facilitating the COQ7-mediated hydroxylase step. Participates in the biosynthesis of coenzyme Q, also named ubiquinone, an essential lipid-soluble electron transporter for aerobic cellular respiration. The sequence is that of Ubiquinone biosynthesis protein COQ9-B, mitochondrial (coq9-b) from Xenopus laevis (African clawed frog).